Consider the following 172-residue polypeptide: Protein GrpE (172 aa).

A compositionally biased stretch (low complexity) spans 1–11 (MSEENNSQNSN). Residues 1-22 (MSEENNSQNSNPPNPENGEIAS) are disordered.

This sequence belongs to the GrpE family. As to quaternary structure, homodimer.

It is found in the cytoplasm. Functionally, participates actively in the response to hyperosmotic and heat shock by preventing the aggregation of stress-denatured proteins, in association with DnaK and GrpE. It is the nucleotide exchange factor for DnaK and may function as a thermosensor. Unfolded proteins bind initially to DnaJ; upon interaction with the DnaJ-bound protein, DnaK hydrolyzes its bound ATP, resulting in the formation of a stable complex. GrpE releases ADP from DnaK; ATP binding to DnaK triggers the release of the substrate protein, thus completing the reaction cycle. Several rounds of ATP-dependent interactions between DnaJ, DnaK and GrpE are required for fully efficient folding. In Bdellovibrio bacteriovorus (strain ATCC 15356 / DSM 50701 / NCIMB 9529 / HD100), this protein is Protein GrpE.